Here is a 202-residue protein sequence, read N- to C-terminus: B-cell CLL/lymphoma 7 protein family member B (202 aa).

Positions 53 to 202 (DSKEKEKSKS…PAVPQTASES (150 aa)) are disordered. The span at 90-99 (ENSNQSSVSD) shows a compositional bias: polar residues. Residues 107 to 123 (SSTNSSPSPQQSESLSP) are compositionally biased toward low complexity. 7 positions are modified to phosphoserine: serine 114, serine 118, serine 120, serine 122, serine 127, serine 148, and serine 152.

Belongs to the BCL7 family.

Functionally, positive regulator of apoptosis. Plays a role in the Wnt signaling pathway, negatively regulating the expression of Wnt signaling components CTNNB1 and HMGA1. Involved in cell cycle progression, maintenance of the nuclear structure and stem cell differentiation. May play a role in lung tumor development or progression. The polypeptide is B-cell CLL/lymphoma 7 protein family member B (BCL7B) (Bos taurus (Bovine)).